The primary structure comprises 461 residues: Nuclear distribution protein PAC1 (461 aa).

The region spanning 9 to 41 (QAEELHKAIIAYLSANNLSSSATALRTELGLAE) is the LisH domain. Positions 61-88 (TSVVRLQKKIMDLESRNNALQSELDNAT) form a coiled coil. WD repeat units lie at residues 114–155 (SHQN…RTIK), 157–197 (HTRP…KNIR), 201–248 (GHDH…CLKT), 251–290 (GHTA…PENR), 295–355 (GHDH…LKTL), 357–396 (GHDN…KCVK), 401–444 (VHER…VRIR), and 446–461 (VIAT…IFAN).

This sequence belongs to the WD repeat LIS1/nudF family. Self-associates. Interacts with NDL1 and dynein.

The protein resides in the cytoplasm. It is found in the cytoskeleton. Its subcellular location is the spindle pole. Its function is as follows. Positively regulates the activity of the minus-end directed microtubule motor protein dynein. May enhance dynein-mediated microtubule sliding by targeting dynein to the microtubule plus end. Required for nuclear migration during vegetative growth as well as development. Required for retrograde early endosome (EE) transport from the hyphal tip. Required for localization of dynein to the mitotic spindle poles. Recruits additional proteins to the dynein complex at SPBs. The chain is Nuclear distribution protein PAC1 from Pyricularia oryzae (strain 70-15 / ATCC MYA-4617 / FGSC 8958) (Rice blast fungus).